Here is a 276-residue protein sequence, read N- to C-terminus: Rhomboid protease GlpG (276 aa).

A run of 6 helical transmembrane segments spans residues 94-114 (AGPL…LMQI), 142-162 (ALLH…WYLG), 168-188 (VLGT…SGWA), 193-213 (SGTY…YVWL), 229-249 (LMAF…GMSI), and 250-270 (ANAA…WDTY). Serine 201 acts as the Nucleophile in catalysis. Residue histidine 254 is part of the active site.

This sequence belongs to the peptidase S54 family.

It localises to the cell inner membrane. It carries out the reaction Cleaves type-1 transmembrane domains using a catalytic dyad composed of serine and histidine that are contributed by different transmembrane domains.. Its function is as follows. Rhomboid-type serine protease that catalyzes intramembrane proteolysis. The chain is Rhomboid protease GlpG from Pectobacterium atrosepticum (strain SCRI 1043 / ATCC BAA-672) (Erwinia carotovora subsp. atroseptica).